The primary structure comprises 988 residues: Transposase for transposon Tn21 (988 aa).

The disordered stretch occupies residues 672 to 696 (GDGTTSSSDEQNFRTASKAKSTGHI). Residues 674–695 (GTTSSSDEQNFRTASKAKSTGH) show a composition bias toward polar residues.

Belongs to the transposase 7 family.

Functionally, required for transposition of transposon Tn21. This is Transposase for transposon Tn21 (tnpA) from Escherichia coli.